Consider the following 259-residue polypeptide: Alpha-acetolactate decarboxylase (259 aa).

Belongs to the alpha-acetolactate decarboxylase family.

It catalyses the reaction (2S)-2-acetolactate + H(+) = (R)-acetoin + CO2. It functions in the pathway polyol metabolism; (R,R)-butane-2,3-diol biosynthesis; (R,R)-butane-2,3-diol from pyruvate: step 2/3. In terms of biological role, converts acetolactate into acetoin, which can be excreted by the cells. This may be a mechanism for controlling the internal pH of cells in the stationary stage. In Raoultella terrigena (Klebsiella terrigena), this protein is Alpha-acetolactate decarboxylase (budA).